Here is a 351-residue protein sequence, read N- to C-terminus: Heat-inducible transcription repressor HrcA (351 aa).

It belongs to the HrcA family.

In terms of biological role, negative regulator of class I heat shock genes (grpE-dnaK-dnaJ and groELS operons). Prevents heat-shock induction of these operons. In Mycoplasma pneumoniae (strain ATCC 29342 / M129 / Subtype 1) (Mycoplasmoides pneumoniae), this protein is Heat-inducible transcription repressor HrcA.